Reading from the N-terminus, the 141-residue chain is Nucleoside diphosphate kinase (141 aa).

ATP is bound by residues lysine 11, phenylalanine 59, arginine 87, threonine 93, arginine 104, and asparagine 114. The active-site Pros-phosphohistidine intermediate is histidine 117.

The protein belongs to the NDK family. In terms of assembly, homotetramer. It depends on Mg(2+) as a cofactor.

The protein resides in the cytoplasm. It catalyses the reaction a 2'-deoxyribonucleoside 5'-diphosphate + ATP = a 2'-deoxyribonucleoside 5'-triphosphate + ADP. The catalysed reaction is a ribonucleoside 5'-diphosphate + ATP = a ribonucleoside 5'-triphosphate + ADP. Major role in the synthesis of nucleoside triphosphates other than ATP. The ATP gamma phosphate is transferred to the NDP beta phosphate via a ping-pong mechanism, using a phosphorylated active-site intermediate. The polypeptide is Nucleoside diphosphate kinase (Halorhodospira halophila (strain DSM 244 / SL1) (Ectothiorhodospira halophila (strain DSM 244 / SL1))).